Here is a 96-residue protein sequence, read N- to C-terminus: UPF0235 protein YggU (96 aa).

This sequence belongs to the UPF0235 family.

The sequence is that of UPF0235 protein YggU from Escherichia coli O127:H6 (strain E2348/69 / EPEC).